Here is an 827-residue protein sequence, read N- to C-terminus: Copper-transporting ATPase 2 (827 aa).

HMA domains follow at residues 15–80 and 82–148; these read VSTN…YAPR and ATEE…YELR. C26, C29, C93, and C96 together coordinate Cu cation. Transmembrane regions (helical) follow at residues 174 to 194, 210 to 230, 246 to 266, 271 to 291, 430 to 450, and 458 to 478; these read VTIS…SHFI, NLYL…LRFF, SLVV…TFVP, SGTA…VLLG, GWFV…WYTF, and FALV…MGLA. D515 acts as the 4-aspartylphosphate intermediate in catalysis. Mg(2+) is bound by residues D714 and D718. Helical transmembrane passes span 771-793 and 797-819; these read NLFW…LYPV and LLSP…GNAL.

The protein belongs to the cation transport ATPase (P-type) (TC 3.A.3) family. Type IB subfamily.

The protein resides in the cell membrane. The enzyme catalyses Cu(2+)(in) + ATP + H2O = Cu(2+)(out) + ADP + phosphate + H(+). Involved in copper transport. The sequence is that of Copper-transporting ATPase 2 (actP2) from Rhizobium meliloti (strain 1021) (Ensifer meliloti).